A 167-amino-acid chain; its full sequence is Phospholipase A2 (167 aa).

Residues 1 to 18 (MQVVLGSLFLLLLSTSHG) form the signal peptide. Residues 19–33 (WQIRDRIGDNELEER) constitute a propeptide that is removed on maturation. Positions 41, 43, and 45 each coordinate Ca(2+). Intrachain disulfides connect Cys42/Cys64, Cys63/Cys103, Cys70/Cys96, Cys94/Cys128, and Cys138/Cys146. An N-linked (GlcNAc...) asparagine glycan is attached at Asn46. The active site involves His67. Asp68 serves as a coordination point for Ca(2+). Asp97 is an active-site residue.

The protein belongs to the phospholipase A2 family. Group III subfamily. The cofactor is Ca(2+). N-glycosylated; contains mannose, N-acetylglucosamine and fucose alphal-6 and/or alphal-3 linked to the innermost N-acetylglucosamine. In terms of tissue distribution, expressed by the venom gland.

It is found in the secreted. It carries out the reaction a 1,2-diacyl-sn-glycero-3-phosphocholine + H2O = a 1-acyl-sn-glycero-3-phosphocholine + a fatty acid + H(+). Functionally, in vivo, intraplantar injection in mice cause spontaneous pain behaviors and paw swelling. PLA2 catalyzes the calcium-dependent hydrolysis of the 2-acyl groups in 3-sn-phosphoglycerides. The polypeptide is Phospholipase A2 (Apis mellifera (Honeybee)).